The primary structure comprises 116 residues: Large ribosomal subunit protein uL18 (116 aa).

It belongs to the universal ribosomal protein uL18 family. As to quaternary structure, part of the 50S ribosomal subunit; part of the 5S rRNA/L5/L18/L25 subcomplex. Contacts the 5S and 23S rRNAs.

This is one of the proteins that bind and probably mediate the attachment of the 5S RNA into the large ribosomal subunit, where it forms part of the central protuberance. The polypeptide is Large ribosomal subunit protein uL18 (Exiguobacterium sibiricum (strain DSM 17290 / CCUG 55495 / CIP 109462 / JCM 13490 / 255-15)).